We begin with the raw amino-acid sequence, 318 residues long: Cytosolic Fe-S cluster assembly factor Nubp1 homolog (318 aa).

The segment covering 1–15 (MSAPEVENKPADAPE) has biased composition (basic and acidic residues). The segment at 1-29 (MSAPEVENKPADAPEHCPGTESENAGKAS) is disordered. Cysteine 17, cysteine 31, cysteine 34, and cysteine 40 together coordinate [4Fe-4S] cluster. 70-77 (GKGGVGKS) is a binding site for ATP. Residues cysteine 245 and cysteine 248 each coordinate [4Fe-4S] cluster.

The protein belongs to the Mrp/NBP35 ATP-binding proteins family. NUBP1/NBP35 subfamily. Heterotetramer of 2 Nubp1 and 2 Nubp2 chains. It depends on [4Fe-4S] cluster as a cofactor.

Its subcellular location is the cytoplasm. Its function is as follows. Component of the cytosolic iron-sulfur (Fe/S) protein assembly (CIA) machinery. Required for maturation of extramitochondrial Fe-S proteins. The Nubp1-Nubp2 heterotetramer forms a Fe-S scaffold complex, mediating the de novo assembly of an Fe-S cluster and its transfer to target apoproteins. This Aedes aegypti (Yellowfever mosquito) protein is Cytosolic Fe-S cluster assembly factor Nubp1 homolog.